The primary structure comprises 113 residues: Large ribosomal subunit protein P2 (113 aa).

The segment at Leu62–Asp113 is disordered. Over residues Ser76 to Glu93 the composition is skewed to low complexity. Ser103 carries the post-translational modification Phosphoserine.

The protein belongs to the eukaryotic ribosomal protein P1/P2 family. In terms of assembly, P1 and P2 exist as dimers at the large ribosomal subunit.

Functionally, plays an important role in the elongation step of protein synthesis. The polypeptide is Large ribosomal subunit protein P2 (ALTA5) (Alternaria alternata (Alternaria rot fungus)).